The sequence spans 293 residues: Probable E3 ubiquitin-protein ligase RNF144A-B (293 aa).

Residues 16–237 (PLLSCKLCLG…YDKGPCRNKL (222 aa)) are TRIAD supradomain. Zn(2+) is bound by residues Cys20, Cys23, Cys43, Cys46, Cys111, Cys116, Cys135, Cys138, Cys143, Cys146, His151, Cys156, Cys186, and Cys189. The segment at 20 to 70 (CKLCLGEFPLEQMTTISQCQCIFCSLCLKQYVELLIKEGLETAISCPDSAC) adopts an RING-type 1 zinc-finger fold. An IBR-type zinc finger spans residues 91–156 (QHYKRLQFER…RADCHTGQAC (66 aa)). The segment at 186-215 (CPKCKVYIERDEGCAQMMCKNCKHAFCWYC) adopts an RING-type 2; atypical zinc-finger fold. The active site involves Cys199. Residues Cys204, Cys207, Cys212, Cys215, His227, and Cys233 each coordinate Zn(2+). The helical transmembrane segment at 251 to 271 (VVGIFAGFGLLLLVASPFLLL) threads the bilayer.

The protein belongs to the RBR family. RNF144 subfamily.

Its subcellular location is the membrane. The enzyme catalyses [E2 ubiquitin-conjugating enzyme]-S-ubiquitinyl-L-cysteine + [acceptor protein]-L-lysine = [E2 ubiquitin-conjugating enzyme]-L-cysteine + [acceptor protein]-N(6)-ubiquitinyl-L-lysine.. It functions in the pathway protein modification; protein ubiquitination. Functionally, E3 ubiquitin-protein ligase which accepts ubiquitin from E2 ubiquitin-conjugating enzymes ube2l3 and ube2l6 in the form of a thioester and then directly transfers the ubiquitin to targeted substrates. The sequence is that of Probable E3 ubiquitin-protein ligase RNF144A-B (rnf144ab) from Danio rerio (Zebrafish).